A 520-amino-acid chain; its full sequence is GMP synthase [glutamine-hydrolyzing] (520 aa).

One can recognise a Glutamine amidotransferase type-1 domain in the interval 9–202 (KILILDFGSQ…VRAICGCTGH (194 aa)). The Nucleophile role is filled by cysteine 86. Active-site residues include histidine 176 and glutamate 178. The region spanning 203–395 (WTPGQIIEDA…LGLPHQMVWR (193 aa)) is the GMPS ATP-PPase domain. 230–236 (SGGVDSS) is an ATP binding site.

Homodimer.

It catalyses the reaction XMP + L-glutamine + ATP + H2O = GMP + L-glutamate + AMP + diphosphate + 2 H(+). It functions in the pathway purine metabolism; GMP biosynthesis; GMP from XMP (L-Gln route): step 1/1. Catalyzes the synthesis of GMP from XMP. The protein is GMP synthase [glutamine-hydrolyzing] of Pelobacter propionicus (strain DSM 2379 / NBRC 103807 / OttBd1).